Reading from the N-terminus, the 1299-residue chain is DNA-directed RNA polymerase subunit beta' (1299 aa).

Positions 60, 62, 75, and 78 each coordinate Zn(2+). The segment at 188–209 (GAKSDQKRRAKDGAEKEMGQTR) is disordered. Mg(2+) contacts are provided by Asp535, Asp537, and Asp539. Residues Cys882, Cys959, Cys966, and Cys969 each contribute to the Zn(2+) site.

It belongs to the RNA polymerase beta' chain family. As to quaternary structure, the RNAP catalytic core consists of 2 alpha, 1 beta, 1 beta' and 1 omega subunit. When a sigma factor is associated with the core the holoenzyme is formed, which can initiate transcription. Requires Mg(2+) as cofactor. It depends on Zn(2+) as a cofactor.

It carries out the reaction RNA(n) + a ribonucleoside 5'-triphosphate = RNA(n+1) + diphosphate. DNA-dependent RNA polymerase catalyzes the transcription of DNA into RNA using the four ribonucleoside triphosphates as substrates. This Clavibacter sepedonicus (Clavibacter michiganensis subsp. sepedonicus) protein is DNA-directed RNA polymerase subunit beta'.